Here is a 204-residue protein sequence, read N- to C-terminus: MEPISTITGKVVVLPVENIDTDQIIPARFLKVTDKSGLAAGLFEAWRYLPDGTLNPDFPLNRPEAAGATILISGRNFGCGSSREHAPWALQDYGFQAVIAPSFADIFRNNALKIGLLPVMVEQSVYDELVVMYANDPSMVLTIDLAAQIVALPDGRQVHFPIDAFSKYCLLHGVDQLGFLLQQEAAIAAYEAAHPQPVQTTVRR.

This sequence belongs to the LeuD family. LeuD type 1 subfamily. Heterodimer of LeuC and LeuD.

It carries out the reaction (2R,3S)-3-isopropylmalate = (2S)-2-isopropylmalate. Its pathway is amino-acid biosynthesis; L-leucine biosynthesis; L-leucine from 3-methyl-2-oxobutanoate: step 2/4. Functionally, catalyzes the isomerization between 2-isopropylmalate and 3-isopropylmalate, via the formation of 2-isopropylmaleate. In Chloroflexus aggregans (strain MD-66 / DSM 9485), this protein is 3-isopropylmalate dehydratase small subunit.